Reading from the N-terminus, the 303-residue chain is NAD(+)--arginine ADP-ribosyltransferase Lart1 (303 aa).

Its subcellular location is the secreted. It catalyses the reaction L-arginyl-[protein] + NAD(+) = N(omega)-(ADP-D-ribosyl)-L-arginyl-[protein] + nicotinamide + H(+). Functionally, ADP-ribosyltransferase that targets a specific class of NAD(+)-dependent glutamate dehydrogenase (GDH) enzymes found in fungi and protists, including many natural hosts of Legionella. Acts by targeting a conserved arginine residue in the NAD(+)-binding pocket of GDH, thereby blocking oxidative deamination of glutamate. Lart1 may target amoeba GDH to prevent a conserved stress response. In vitro, acts on Glud2 from the amoeba Dictyostelium discoideum (DdGluD2) and yeast Gdh2p but does not act on human or Legionella GDH homologs. The polypeptide is NAD(+)--arginine ADP-ribosyltransferase Lart1 (Legionella pneumophila subsp. pneumophila (strain Philadelphia 1 / ATCC 33152 / DSM 7513)).